The chain runs to 208 residues: Uracil phosphoribosyltransferase (208 aa).

Residues Arg78, Arg103, and 130–138 (DPMLATGGS) contribute to the 5-phospho-alpha-D-ribose 1-diphosphate site. Residues Ile193 and 198 to 200 (GDA) contribute to the uracil site. Asp199 provides a ligand contact to 5-phospho-alpha-D-ribose 1-diphosphate.

Belongs to the UPRTase family. Mg(2+) serves as cofactor.

It catalyses the reaction UMP + diphosphate = 5-phospho-alpha-D-ribose 1-diphosphate + uracil. It participates in pyrimidine metabolism; UMP biosynthesis via salvage pathway; UMP from uracil: step 1/1. Its activity is regulated as follows. Allosterically activated by GTP. Functionally, catalyzes the conversion of uracil and 5-phospho-alpha-D-ribose 1-diphosphate (PRPP) to UMP and diphosphate. In Vibrio parahaemolyticus serotype O3:K6 (strain RIMD 2210633), this protein is Uracil phosphoribosyltransferase.